A 206-amino-acid polypeptide reads, in one-letter code: AT-hook motif nuclear-localized protein 28 (206 aa).

2 disordered regions span residues 1-21 and 160-206; these read METV…PKAP and TEEE…PSPY. The segment at residues 5 to 17 is a DNA-binding region (a.T hook); sequence GRPRGRPRGSKNK. A compositionally biased stretch (basic residues) spans 7 to 18; the sequence is PRGRPRGSKNKP. The region spanning 27-173 is the PPC domain; it reads DPPMSPYILE…QRNSAEGEEE (147 aa).

The protein localises to the nucleus. Its function is as follows. Transcription factor that specifically binds AT-rich DNA sequences related to the nuclear matrix attachment regions (MARs). The protein is AT-hook motif nuclear-localized protein 28 of Arabidopsis thaliana (Mouse-ear cress).